The chain runs to 241 residues: Sugar fermentation stimulation protein homolog (241 aa).

This sequence belongs to the SfsA family.

In Yersinia enterocolitica serotype O:8 / biotype 1B (strain NCTC 13174 / 8081), this protein is Sugar fermentation stimulation protein homolog.